The sequence spans 271 residues: Tryptophan synthase alpha chain (271 aa).

Catalysis depends on proton acceptor residues glutamate 49 and aspartate 60.

Belongs to the TrpA family. Tetramer of two alpha and two beta chains.

It catalyses the reaction (1S,2R)-1-C-(indol-3-yl)glycerol 3-phosphate + L-serine = D-glyceraldehyde 3-phosphate + L-tryptophan + H2O. Its pathway is amino-acid biosynthesis; L-tryptophan biosynthesis; L-tryptophan from chorismate: step 5/5. In terms of biological role, the alpha subunit is responsible for the aldol cleavage of indoleglycerol phosphate to indole and glyceraldehyde 3-phosphate. The polypeptide is Tryptophan synthase alpha chain (Aromatoleum aromaticum (strain DSM 19018 / LMG 30748 / EbN1) (Azoarcus sp. (strain EbN1))).